Reading from the N-terminus, the 153-residue chain is Protein eva-1 homolog A (153 aa).

Residues 37–57 (ALYFVCGVCLGLVLTLIALVV) form a helical membrane-spanning segment. The interval 66 to 97 (KTQQAPKKTGKTVENTSDTSDSDSDWDNTSDL) is disordered.

The protein belongs to the EVA1 family.

The protein resides in the endoplasmic reticulum membrane. The protein localises to the lysosome membrane. Acts as a regulator of programmed cell death, mediating both autophagy and apoptosis. The sequence is that of Protein eva-1 homolog A (Eva1a) from Danio rerio (Zebrafish).